We begin with the raw amino-acid sequence, 467 residues long: Citrate synthase, mitochondrial (467 aa).

Active-site residues include His301 and His347.

This sequence belongs to the citrate synthase family.

It is found in the mitochondrion matrix. The catalysed reaction is oxaloacetate + acetyl-CoA + H2O = citrate + CoA + H(+). Its pathway is carbohydrate metabolism; tricarboxylic acid cycle; isocitrate from oxaloacetate: step 1/2. This is Citrate synthase, mitochondrial (CIT) from Candida tropicalis (Yeast).